The following is a 78-amino-acid chain: Serine rich endogenous peptide 19 (78 aa).

An N-terminal signal peptide occupies residues 1-25 (MCNIVVFLLTLTLFLFSGLSNTAFA). The SCOOP motif signature appears at 50-64 (KIEVDGSCSRRAPGR). Residues 56–58 (SCS) carry the SxS motif essential for MIK2 binding motif. A disordered region spans residues 57–78 (CSRRAPGRRRPPNRPPKPCTKP). The segment covering 69–78 (NRPPKPCTKP) has biased composition (pro residues).

It belongs to the serine rich endogenous peptide (SCOOP) phytocytokine family. Interacts with MIK2 (via extracellular leucine-rich repeat domain); this interaction triggers the formation of complex between MIK2 and the BAK1/SERK3 and SERK4 coreceptors, and subsequent BAK1 activation by phosphorylation.

Its subcellular location is the cell membrane. It localises to the secreted. The protein resides in the extracellular space. It is found in the apoplast. Functionally, brassicaceae-specific phytocytokine (plant endogenous peptide released into the apoplast) perceived by MIK2 in a BAK1/SERK3 and SERK4 coreceptors-dependent manner, that modulates various physiological and antimicrobial processes including growth prevention and reactive oxygen species (ROS) response regulation. This Arabidopsis thaliana (Mouse-ear cress) protein is Serine rich endogenous peptide 19.